The primary structure comprises 152 residues: Proteolipid protein 2 (152 aa).

An MARVEL domain is found at 19–137 (FSRTRKGFLL…DAYITFPLRQ (119 aa)). Helical transmembrane passes span 25–45 (GFLL…FSTS), 48–68 (GYSF…VVYM), and 85–105 (FFRT…VLVE). A glycan (N-linked (GlcNAc...) asparagine) is linked at N108. The chain crosses the membrane as a helical span at residues 112-132 (IAAGALGLCAAGLFGYDAYIT).

The protein resides in the membrane. May play a role in cell differentiation in the intestinal epithelium. This chain is Proteolipid protein 2 (PLP2), found in Bos taurus (Bovine).